We begin with the raw amino-acid sequence, 53 residues long: uncharacterized protein (53 aa).

This is an uncharacterized protein from Thermoproteus tenax (TTV1).